The chain runs to 117 residues: Acylphosphatase (117 aa).

Residues 31-117 (RWRWIIQGQV…RGDDWFEVRY (87 aa)) form the Acylphosphatase-like domain. Catalysis depends on residues Arg-46 and Asn-64.

It belongs to the acylphosphatase family.

The enzyme catalyses an acyl phosphate + H2O = a carboxylate + phosphate + H(+). This is Acylphosphatase (acyP) from Synechococcus sp. (strain CC9902).